The sequence spans 280 residues: Polyamine aminopropyltransferase (280 aa).

Residues 2–235 (GGWIDEEHRG…GWWSWTFAAV (234 aa)) form the PABS domain. Gln29 is an S-methyl-5'-thioadenosine binding site. Spermidine contacts are provided by His60 and Asp84. Residues Glu104 and 136-137 (DG) each bind S-methyl-5'-thioadenosine. Asp155 acts as the Proton acceptor in catalysis. Residue Pro162 participates in S-methyl-5'-thioadenosine binding.

Belongs to the spermidine/spermine synthase family. In terms of assembly, homodimer or homotetramer.

It localises to the cytoplasm. The catalysed reaction is S-adenosyl 3-(methylsulfanyl)propylamine + putrescine = S-methyl-5'-thioadenosine + spermidine + H(+). It functions in the pathway amine and polyamine biosynthesis; spermidine biosynthesis; spermidine from putrescine: step 1/1. Its function is as follows. Catalyzes the irreversible transfer of a propylamine group from the amino donor S-adenosylmethioninamine (decarboxy-AdoMet) to putrescine (1,4-diaminobutane) to yield spermidine. The chain is Polyamine aminopropyltransferase from Parasynechococcus marenigrum (strain WH8102).